The chain runs to 665 residues: Probable protein transport Sec1a (665 aa).

The tract at residues 543-594 is disordered; that stretch reads PSPSFRGIPSASTQTSPAHQPAQSMRSRRTGGTWARPRDSDDGYSSDSVLKH. 2 stretches are compositionally biased toward polar residues: residues 552–567 and 585–594; these read SAST…AQSM and GYSSDSVLKH.

This sequence belongs to the STXBP/unc-18/SEC1 family.

Functionally, involved in the vesicle trafficking. Binds syntaxins. In Oryza sativa subsp. japonica (Rice), this protein is Probable protein transport Sec1a.